The sequence spans 330 residues: Malate dehydrogenase (330 aa).

Residue 12–18 (GAAGQIG) coordinates NAD(+). Residues Arg-93 and Arg-99 each contribute to the substrate site. NAD(+) contacts are provided by residues Asn-106, Gln-113, and 130–132 (VGN). Residues Asn-132 and Arg-163 each coordinate substrate. His-188 acts as the Proton acceptor in catalysis.

It belongs to the LDH/MDH superfamily. MDH type 2 family.

The catalysed reaction is (S)-malate + NAD(+) = oxaloacetate + NADH + H(+). In terms of biological role, catalyzes the reversible oxidation of malate to oxaloacetate. This chain is Malate dehydrogenase, found in Legionella pneumophila subsp. pneumophila (strain Philadelphia 1 / ATCC 33152 / DSM 7513).